Consider the following 228-residue polypeptide: Interleukin-27 subunit beta (228 aa).

The N-terminal stretch at 1-18 is a signal peptide; it reads MSKLLFLSLALWASRSPG. Fibronectin type-III domains lie at 26–124 and 127–224; these read ALSQ…VAER and KPDP…VESA. N-linked (GlcNAc...) asparagine glycosylation is found at Asn54 and Asn104.

The protein belongs to the type I cytokine receptor family. Type 3 subfamily. As to quaternary structure, heterodimer with IL27/IL27A; not disulfide-linked. This heterodimer is known as interleukin IL-27. Heterodimer with IL12A; not disulfide-linked. This heterodimer is known as interleukin IL-35. Interacts with SQSTM1.

It is found in the secreted. Associates with IL27 to form the IL-27 interleukin, a heterodimeric cytokine which functions in innate immunity. IL-27 has pro- and anti-inflammatory properties, that can regulate T-helper cell development, suppress T-cell proliferation, stimulate cytotoxic T-cell activity, induce isotype switching in B-cells, and that has diverse effects on innate immune cells. Among its target cells are CD4 T-helper cells which can differentiate in type 1 effector cells (TH1), type 2 effector cells (TH2) and IL17 producing helper T-cells (TH17). It drives rapid clonal expansion of naive but not memory CD4 T-cells. It also strongly synergizes with IL-12 to trigger interferon-gamma/IFN-gamma production of naive CD4 T-cells, binds to the cytokine receptor WSX-1/TCCR. Another important role of IL-27 is its antitumor activity as well as its antiangiogenic activity with activation of production of antiangiogenic chemokines. This is Interleukin-27 subunit beta (Ebi3) from Mus musculus (Mouse).